A 365-amino-acid polypeptide reads, in one-letter code: MLSNGISEDDLFSFLSLHKKEDLDHRYILSSMCTLPHPVAVRAHCMFMETNLGDPGLFPGTAALERLLVERLGTLFHHKNAGGYATSGGTESNIQALRLAKALRPGSSPNVVLPESVHFSFKKACDLLSLEMRSVPLGTDRRIMADKAAELIDKNTICLVGVAGTTEYGMVDPIADLAKIAAQQDIFLHVDAAFGGMVIPFLPKPVPFDFALPGVTTLAVDPHKMGMSTIPAGVLLTREPDMLDALNIDTPYLTVKKGYTLGGTRPGAPMAGALAVLDYLGISGMKAVVAGCMKNTERLIAGMETRGIQPAASPDVNVATFVCDRVPEPWKVSWTRAGHLRIVCMPHVTADRIEAFLSDFGDMYA.

The residue at position 224 (Lys-224) is an N6-(pyridoxal phosphate)lysine.

This sequence belongs to the group II decarboxylase family. MfnA subfamily. The cofactor is pyridoxal 5'-phosphate.

The catalysed reaction is L-tyrosine + H(+) = tyramine + CO2. The enzyme catalyses L-aspartate + H(+) = beta-alanine + CO2. It participates in cofactor biosynthesis; methanofuran biosynthesis. The protein operates within cofactor biosynthesis; coenzyme A biosynthesis. Functionally, catalyzes the decarboxylation of L-tyrosine to produce tyramine for methanofuran biosynthesis. Can also catalyze the decarboxylation of L-aspartate to produce beta-alanine for coenzyme A (CoA) biosynthesis. The chain is Probable L-tyrosine/L-aspartate decarboxylase from Methanoregula boonei (strain DSM 21154 / JCM 14090 / 6A8).